A 143-amino-acid polypeptide reads, in one-letter code: 6,7-dimethyl-8-ribityllumazine synthase (143 aa).

Residues Phe-13, 45–47 (TFD), and 69–71 (CVI) contribute to the 5-amino-6-(D-ribitylamino)uracil site. (2S)-2-hydroxy-3-oxobutyl phosphate is bound at residue 74 to 75 (ET). His-77 (proton donor) is an active-site residue. Leu-102 contacts 5-amino-6-(D-ribitylamino)uracil. (2S)-2-hydroxy-3-oxobutyl phosphate is bound at residue Arg-117.

This sequence belongs to the DMRL synthase family.

The catalysed reaction is (2S)-2-hydroxy-3-oxobutyl phosphate + 5-amino-6-(D-ribitylamino)uracil = 6,7-dimethyl-8-(1-D-ribityl)lumazine + phosphate + 2 H2O + H(+). It participates in cofactor biosynthesis; riboflavin biosynthesis; riboflavin from 2-hydroxy-3-oxobutyl phosphate and 5-amino-6-(D-ribitylamino)uracil: step 1/2. In terms of biological role, catalyzes the formation of 6,7-dimethyl-8-ribityllumazine by condensation of 5-amino-6-(D-ribitylamino)uracil with 3,4-dihydroxy-2-butanone 4-phosphate. This is the penultimate step in the biosynthesis of riboflavin. In Archaeoglobus fulgidus (strain ATCC 49558 / DSM 4304 / JCM 9628 / NBRC 100126 / VC-16), this protein is 6,7-dimethyl-8-ribityllumazine synthase.